The following is a 111-amino-acid chain: Colicin-Ia immunity protein (111 aa).

A run of 2 helical transmembrane segments spans residues 33 to 53 (LLFW…KWYI) and 85 to 105 (TGTV…SVII).

It is found in the cell membrane. Functionally, this protein is able to protect a cell, which harbors the plasmid ColIa-CA53 encoding colicin Ia, against colicin Ia. This chain is Colicin-Ia immunity protein, found in Escherichia coli.